A 113-amino-acid chain; its full sequence is Large ribosomal subunit protein uL22 (113 aa).

Belongs to the universal ribosomal protein uL22 family. Part of the 50S ribosomal subunit.

This protein binds specifically to 23S rRNA; its binding is stimulated by other ribosomal proteins, e.g. L4, L17, and L20. It is important during the early stages of 50S assembly. It makes multiple contacts with different domains of the 23S rRNA in the assembled 50S subunit and ribosome. Functionally, the globular domain of the protein is located near the polypeptide exit tunnel on the outside of the subunit, while an extended beta-hairpin is found that lines the wall of the exit tunnel in the center of the 70S ribosome. This is Large ribosomal subunit protein uL22 from Trichlorobacter lovleyi (strain ATCC BAA-1151 / DSM 17278 / SZ) (Geobacter lovleyi).